Reading from the N-terminus, the 736-residue chain is DNA ligase (736 aa).

NAD(+) contacts are provided by residues 41–45 (DQEYD), 91–92 (SL), and glutamate 125. Lysine 127 functions as the N6-AMP-lysine intermediate in the catalytic mechanism. Position 148 (arginine 148) interacts with NAD(+). The tract at residues 170-205 (ELTPLPLAGGAGGGPLDDSGSAPTPDPSRRREGKWN) is disordered. NAD(+)-binding residues include glutamate 215, lysine 347, and lysine 371. Zn(2+)-binding residues include cysteine 463, cysteine 466, cysteine 481, and cysteine 487. The 81-residue stretch at 656–736 (TLDSPVAGKT…GWAEIVAAAG (81 aa)) folds into the BRCT domain.

Belongs to the NAD-dependent DNA ligase family. LigA subfamily. The cofactor is Mg(2+). Mn(2+) is required as a cofactor.

It carries out the reaction NAD(+) + (deoxyribonucleotide)n-3'-hydroxyl + 5'-phospho-(deoxyribonucleotide)m = (deoxyribonucleotide)n+m + AMP + beta-nicotinamide D-nucleotide.. In terms of biological role, DNA ligase that catalyzes the formation of phosphodiester linkages between 5'-phosphoryl and 3'-hydroxyl groups in double-stranded DNA using NAD as a coenzyme and as the energy source for the reaction. It is essential for DNA replication and repair of damaged DNA. The sequence is that of DNA ligase from Erythrobacter litoralis (strain HTCC2594).